We begin with the raw amino-acid sequence, 544 residues long: Esterase-6 (544 aa).

A signal peptide spans 1–21 (MNYVGLGLIIVLSCLWLGSNA). A glycan (N-linked (GlcNAc...) asparagine) is linked at N42. C86 and C105 are disulfide-bonded. Residue S209 is the Acyl-ester intermediate of the active site. A disulfide bond links C261 and C273. N-linked (GlcNAc...) asparagine glycans are attached at residues N420 and N456. Residue H466 is the Charge relay system of the active site. N-linked (GlcNAc...) asparagine glycosylation occurs at N506. C514 and C535 form a disulfide bridge.

The protein belongs to the type-B carboxylesterase/lipase family. Monomer. In terms of tissue distribution, specifically expressed in the ejaculatory bulbs of male.

The protein resides in the secreted. It catalyses the reaction a carboxylic ester + H2O = an alcohol + a carboxylate + H(+). Functionally, transferred from the ejaculatory bulbs of males to the female genitals upon copulation, plays an important role in the reproductive biology. The sequence is that of Esterase-6 (Est-6) from Drosophila melanogaster (Fruit fly).